Here is a 499-residue protein sequence, read N- to C-terminus: Patatin-like protein 6 (499 aa).

The region spanning 111 to 314 is the PNPLA domain; that stretch reads LSIDSGGMRG…AMSNPTAAAI (204 aa). The GGXR motif lies at 116-119; it reads GGMR. Serine 155 functions as the Nucleophile in the catalytic mechanism. Residue aspartate 301 is the Proton acceptor of the active site. A DGA/G motif is present at residues 301 to 303; it reads DGG.

Belongs to the patatin family. As to expression, highly expressed in siliques and at lower levels in roots and flowers.

In terms of biological role, possesses non-specific lipolytic acyl hydrolase (LAH) activity. Hydrolyzes phospholipids as well as galactolipids. May play a role in disease resistance. This Arabidopsis thaliana (Mouse-ear cress) protein is Patatin-like protein 6 (PLP6).